Here is a 441-residue protein sequence, read N- to C-terminus: Malate dehydrogenase [NADP], chloroplastic (441 aa).

The N-terminal 51 residues, 1–51, are a transit peptide targeting the chloroplast; it reads MAVAELSPSYKTQLKTCQQLSSSLSTRLSDHRKFSLRLLPRPVSVRGGIRC. The cysteines at positions 75 and 80 are disulfide-linked. Residue 104 to 110 coordinates NADP(+); sequence GAAGMIS. Residues Arg185 and Arg191 each coordinate substrate. Residue Asn198 participates in NADP(+) binding. Gln205 contacts NAD(+). 222–224 serves as a coordination point for NADP(+); sequence VGN. Substrate contacts are provided by Asn224 and Arg255. His280 acts as the Proton acceptor in catalysis. An intrachain disulfide couples Cys416 to Cys428.

The protein belongs to the LDH/MDH superfamily. MDH type 2 family. As to quaternary structure, homodimer.

The protein localises to the plastid. Its subcellular location is the chloroplast. The catalysed reaction is (S)-malate + NADP(+) = oxaloacetate + NADPH + H(+). Its activity is regulated as follows. Chloroplast NADP-MDH is activated upon illumination. In order to be enzymatically active, disulfide bridges on the protein must be reduced by thioredoxin which receives electrons from ferredoxin and the electron transport system of photosynthesis. Functionally, the chloroplastic, NADP-dependent form is essential for the photosynthesis C4 cycle, which allows plants to circumvent the problem of photorespiration. In C4 plants, NADP-MDH activity acts to convert oxaloacetate to malate in chloroplasts of mesophyll cells for transport to the bundle sheath cells. In Mesembryanthemum crystallinum (Common ice plant), this protein is Malate dehydrogenase [NADP], chloroplastic (MDH1).